Reading from the N-terminus, the 149-residue chain is Transcriptional repressor NrdR (149 aa).

A zinc finger spans residues Cys3–Cys34. One can recognise an ATP-cone domain in the interval Pro49–Glu139.

This sequence belongs to the NrdR family. The cofactor is Zn(2+).

In terms of biological role, negatively regulates transcription of bacterial ribonucleotide reductase nrd genes and operons by binding to NrdR-boxes. This is Transcriptional repressor NrdR from Shewanella sp. (strain MR-4).